Consider the following 598-residue polypeptide: Terpenoid synthase 1 (598 aa).

Residues aspartate 362, aspartate 366, asparagine 494, and aspartate 502 each coordinate Mg(2+). The DDXXD motif signature appears at 362 to 366; the sequence is DDTCD.

Belongs to the terpene synthase family. Tpsa subfamily. Mg(2+) serves as cofactor. The cofactor is Mn(2+). In terms of tissue distribution, expressed exclusively in siliques.

The protein resides in the cytoplasm. The protein operates within secondary metabolite biosynthesis; terpenoid biosynthesis. The protein is Terpenoid synthase 1 (TPS01) of Arabidopsis thaliana (Mouse-ear cress).